The chain runs to 170 residues: Acetyl-CoA decarbonylase/synthase complex subunit epsilon 2 (170 aa).

It belongs to the CdhB family. In terms of assembly, heterotetramer of two alpha and two epsilon subunits. The ACDS complex is made up of alpha, epsilon, beta, gamma and delta subunits with a probable stoichiometry of (alpha(2)epsilon(2))(4)-beta(8)-(gamma(1)delta(1))(8).

It participates in one-carbon metabolism; methanogenesis from acetate. Functionally, part of a complex that catalyzes the reversible cleavage of acetyl-CoA, allowing growth on acetate as sole source of carbon and energy. The alpha-epsilon subcomponent functions as a carbon monoxide dehydrogenase. The precise role of the epsilon subunit is unclear; it may have a stabilizing role within the alpha(2)epsilon(2) component and/or be involved in electron transfer to FAD during a potential FAD-mediated CO oxidation. The chain is Acetyl-CoA decarbonylase/synthase complex subunit epsilon 2 (cdhB2) from Methanosarcina mazei (strain ATCC BAA-159 / DSM 3647 / Goe1 / Go1 / JCM 11833 / OCM 88) (Methanosarcina frisia).